Here is a 282-residue protein sequence, read N- to C-terminus: Large ribosomal subunit protein uL2 (282 aa).

The interval 215 to 282 (RHKGIRPTVR…IIRSRKETKK (68 aa)) is disordered. Residues 263 to 282 (RNPKKPSTKLIIRSRKETKK) are compositionally biased toward basic residues.

Belongs to the universal ribosomal protein uL2 family. As to quaternary structure, part of the 50S ribosomal subunit. Forms a bridge to the 30S subunit in the 70S ribosome.

In terms of biological role, one of the primary rRNA binding proteins. Required for association of the 30S and 50S subunits to form the 70S ribosome, for tRNA binding and peptide bond formation. It has been suggested to have peptidyltransferase activity; this is somewhat controversial. Makes several contacts with the 16S rRNA in the 70S ribosome. The polypeptide is Large ribosomal subunit protein uL2 (Mesomycoplasma hyopneumoniae (strain 7448) (Mycoplasma hyopneumoniae)).